The chain runs to 398 residues: ATP-dependent RNA helicase eIF4A (398 aa).

Positions 25 to 53 match the Q motif motif; the sequence is DSFDTMNLKPELLRGVYAYGFERPSAIQQ. One can recognise a Helicase ATP-binding domain in the interval 56-226; sequence IMPVIKGHDV…TKFMRDPVRI (171 aa). Position 69-76 (69-76) interacts with ATP; sequence AQSGTGKT. The short motif at 174–177 is the DEAD box element; that stretch reads DEAD. The Helicase C-terminal domain maps to 237–398; sequence GIKQFYIAVE…EMPMNVADLI (162 aa).

It belongs to the DEAD box helicase family. eIF4A subfamily. In terms of assembly, component of the eIF4F complex, which composition varies with external and internal environmental conditions. It is composed of at least eIF4A, eIF4E and eIF4G.

The protein localises to the cytoplasm. The enzyme catalyses ATP + H2O = ADP + phosphate + H(+). ATP-dependent RNA helicase which is a subunit of the eIF4F complex involved in cap recognition and is required for mRNA binding to ribosome. In the current model of translation initiation, eIF4A unwinds RNA secondary structures in the 5'-UTR of mRNAs which is necessary to allow efficient binding of the small ribosomal subunit, and subsequent scanning for the initiator codon. The sequence is that of ATP-dependent RNA helicase eIF4A (tif1) from Botryotinia fuckeliana (strain B05.10) (Noble rot fungus).